The following is a 464-amino-acid chain: MGKRLLDKLWERHVVTTNENGLDLLYIDLHLVHEVTSPQAFEGLRLTNRTVRRPDLTFATMDHNIPTKDVWNITDRIAKQQLDTLRENCKQFQVPLADIGDEEQGIVHVIGPELGLTQPGKTIVCGDSHTATHGAFGALAFGIGTSEVEHVLATQTLWQRKPKAMGIELKGKLQKGVYAKDIILHLLSKYGVAVGTGYVMEFYGETIESMEMEERMTLCNMAIEGGAKAGIIAPDEKTFAYVKGRKYAPKDYETFEKKWSEFYTDVDAMYDLHILIDVTDLAPYVTWGTNPSMGVRIDERLPEKNDVNDERAFSYMGLSPGQSTYDIPVQHVFIGSCTNSRLSDLEIAASVVKGKKVKEGVRALVVPGSKRVREAAMQKGLHRIFEEAGFEWREPGCSMCLGMNPDQVPEGEHCASTSNRNFEGRQGKGARTHLVSPAMAAAAALYGHFVDTRKESYDGAISYS.

Positions 337, 397, and 400 each coordinate [4Fe-4S] cluster.

This sequence belongs to the aconitase/IPM isomerase family. LeuC type 1 subfamily. Heterodimer of LeuC and LeuD. Requires [4Fe-4S] cluster as cofactor.

The enzyme catalyses (2R,3S)-3-isopropylmalate = (2S)-2-isopropylmalate. It participates in amino-acid biosynthesis; L-leucine biosynthesis; L-leucine from 3-methyl-2-oxobutanoate: step 2/4. Its function is as follows. Catalyzes the isomerization between 2-isopropylmalate and 3-isopropylmalate, via the formation of 2-isopropylmaleate. This Bacillus thuringiensis (strain Al Hakam) protein is 3-isopropylmalate dehydratase large subunit.